We begin with the raw amino-acid sequence, 137 residues long: Fluoride-specific ion channel FluC 1 (137 aa).

Helical transmembrane passes span 4 to 24 (LIYI…YYLG), 37 to 57 (LATL…TTYI), 67 to 87 (VITG…TFSV), and 98 to 118 (WGIA…MSGL). The Na(+) site is built by Gly77 and Thr80.

This sequence belongs to the fluoride channel Fluc/FEX (TC 1.A.43) family.

The protein resides in the cell membrane. It catalyses the reaction fluoride(in) = fluoride(out). Its activity is regulated as follows. Na(+) is not transported, but it plays an essential structural role and its presence is essential for fluoride channel function. Functionally, fluoride-specific ion channel. Important for reducing fluoride concentration in the cell, thus reducing its toxicity. This is Fluoride-specific ion channel FluC 1 from Bacillus cereus (strain ZK / E33L).